The following is a 166-amino-acid chain: Cyanate hydratase (166 aa).

Catalysis depends on residues arginine 92, glutamate 95, and serine 118.

This sequence belongs to the cyanase family.

The catalysed reaction is cyanate + hydrogencarbonate + 3 H(+) = NH4(+) + 2 CO2. In terms of biological role, catalyzes the reaction of cyanate with bicarbonate to produce ammonia and carbon dioxide. The protein is Cyanate hydratase of Zea mays (Maize).